Here is a 397-residue protein sequence, read N- to C-terminus: Ubiquitin-like modifier-activating enzyme 5 (397 aa).

5 residues coordinate ATP: Gly-76, Asp-97, Lys-120, Asn-143, and Asn-177. Cys-219 and Cys-222 together coordinate Zn(2+). Cys-243 (glycyl thioester intermediate) is an active-site residue. Zn(2+) is bound by residues Cys-296 and Cys-301. The disordered stretch occupies residues 362-384 (LAYEPPASTKHSETTSTTAVSDD). Over residues 375-384 (TTSTTAVSDD) the composition is skewed to low complexity.

The protein belongs to the ubiquitin-activating E1 family. UBA5 subfamily.

In terms of biological role, E1-like enzyme which activates UFM1. This chain is Ubiquitin-like modifier-activating enzyme 5, found in Aedes aegypti (Yellowfever mosquito).